The following is a 314-amino-acid chain: GTP cyclohydrolase FolE2 (314 aa).

Residues 290 to 314 (DASAWSAPQAAAPDQQESFATGNER) form a disordered region. A compositionally biased stretch (low complexity) spans 291 to 304 (ASAWSAPQAAAPDQ). Positions 305–314 (QESFATGNER) are enriched in polar residues.

This sequence belongs to the GTP cyclohydrolase IV family.

The enzyme catalyses GTP + H2O = 7,8-dihydroneopterin 3'-triphosphate + formate + H(+). It participates in cofactor biosynthesis; 7,8-dihydroneopterin triphosphate biosynthesis; 7,8-dihydroneopterin triphosphate from GTP: step 1/1. In terms of biological role, converts GTP to 7,8-dihydroneopterin triphosphate. The protein is GTP cyclohydrolase FolE2 of Pseudomonas putida (strain ATCC 47054 / DSM 6125 / CFBP 8728 / NCIMB 11950 / KT2440).